A 295-amino-acid chain; its full sequence is 4-diphosphocytidyl-2-C-methyl-D-erythritol kinase (295 aa).

Residue lysine 22 is part of the active site. 106–116 (PAGGGFGGGSS) provides a ligand contact to ATP. Aspartate 148 is a catalytic residue.

Belongs to the GHMP kinase family. IspE subfamily.

The enzyme catalyses 4-CDP-2-C-methyl-D-erythritol + ATP = 4-CDP-2-C-methyl-D-erythritol 2-phosphate + ADP + H(+). It functions in the pathway isoprenoid biosynthesis; isopentenyl diphosphate biosynthesis via DXP pathway; isopentenyl diphosphate from 1-deoxy-D-xylulose 5-phosphate: step 3/6. Catalyzes the phosphorylation of the position 2 hydroxy group of 4-diphosphocytidyl-2C-methyl-D-erythritol. This chain is 4-diphosphocytidyl-2-C-methyl-D-erythritol kinase, found in Xanthomonas axonopodis pv. citri (strain 306).